The chain runs to 649 residues: Sulfate transporter 1.1 (649 aa).

The disordered stretch occupies residues Met1–Val20. Residues Met1 to Arg86 lie on the Cytoplasmic side of the membrane. The helical transmembrane segment at Gly87 to Ala107 threads the bilayer. The Extracellular portion of the chain corresponds to Lys108 to Asn111. Residues Val112–Gly132 traverse the membrane as a helical segment. Residues Ser133–Asp136 are Cytoplasmic-facing. Residues Ile137–Ile157 traverse the membrane as a helical segment. Topologically, residues Asp158–Arg168 are extracellular. The next 2 helical transmembrane spans lie at Leu169–Leu189 and Gly190–Ile210. The Extracellular segment spans residues Thr211–Asn248. The helical transmembrane segment at Trp249–Gly269 threads the bilayer. The Cytoplasmic portion of the chain corresponds to Lys270–Leu275. A helical membrane pass occupies residues Phe276–Ile296. Over Phe297–Arg334 the chain is Extracellular. A helical transmembrane segment spans residues Ile335 to Ala355. Residues Ala356 to Glu367 are Cytoplasmic-facing. A helical transmembrane segment spans residues Met368–Gly388. Topologically, residues Ser389–Ala404 are extracellular. Residues Val405–Phe425 traverse the membrane as a helical segment. The Cytoplasmic segment spans residues Lys426 to Ala431. A helical transmembrane segment spans residues Ile432 to Leu452. At Ile453–Met465 the chain is on the extracellular side. Residues Gly466–Ile486 traverse the membrane as a helical segment. At Ser487–Thr649 the chain is on the cytoplasmic side. An STAS domain is found at Gln517–Cys640.

This sequence belongs to the SLC26A/SulP transporter (TC 2.A.53) family. As to quaternary structure, interacts with OASA1 through its STAS domain. Expressed in lateral root cap, root hairs, epidermal and cortical cells of roots.

The protein localises to the membrane. In terms of biological role, high-affinity H(+)/sulfate cotransporter that mediates the uptake of the environmental sulfate by plant roots under low-sulfur conditions. Plays a central role in the regulation of sulfate assimilation. The polypeptide is Sulfate transporter 1.1 (SULTR1;1) (Arabidopsis thaliana (Mouse-ear cress)).